The primary structure comprises 506 residues: Maturase K (506 aa).

Belongs to the intron maturase 2 family. MatK subfamily.

It localises to the plastid. The protein resides in the chloroplast. Functionally, usually encoded in the trnK tRNA gene intron. Probably assists in splicing its own and other chloroplast group II introns. This Phyllodoce empetriformis (Pink mountainheath) protein is Maturase K.